Here is a 373-residue protein sequence, read N- to C-terminus: 3-isopropylmalate dehydrogenase (373 aa).

An NAD(+)-binding site is contributed by 82 to 93 (GPKWGTGAVRPE). Residues Arg-100, Arg-110, Arg-139, and Asp-231 each contribute to the substrate site. 2 residues coordinate Mg(2+): Asp-231 and Asp-260. Residue 295-306 (GSAPDLPENKVN) coordinates NAD(+).

The protein belongs to the isocitrate and isopropylmalate dehydrogenases family. As to quaternary structure, homodimer. The cofactor is Mg(2+). It depends on Mn(2+) as a cofactor.

The protein localises to the cytoplasm. It carries out the reaction (2R,3S)-3-isopropylmalate + NAD(+) = 4-methyl-2-oxopentanoate + CO2 + NADH. Its pathway is amino-acid biosynthesis; L-leucine biosynthesis; L-leucine from 3-methyl-2-oxobutanoate: step 3/4. Its function is as follows. Catalyzes the oxidation of 3-carboxy-2-hydroxy-4-methylpentanoate (3-isopropylmalate) to 3-carboxy-4-methyl-2-oxopentanoate. The product decarboxylates to 4-methyl-2 oxopentanoate. In Scheffersomyces stipitis (strain ATCC 58785 / CBS 6054 / NBRC 10063 / NRRL Y-11545) (Yeast), this protein is 3-isopropylmalate dehydrogenase (LEU2).